The chain runs to 325 residues: Phosphate acyltransferase (325 aa).

The protein belongs to the PlsX family. As to quaternary structure, homodimer. Probably interacts with PlsY.

The protein localises to the cytoplasm. It catalyses the reaction a fatty acyl-[ACP] + phosphate = an acyl phosphate + holo-[ACP]. The protein operates within lipid metabolism; phospholipid metabolism. Its function is as follows. Catalyzes the reversible formation of acyl-phosphate (acyl-PO(4)) from acyl-[acyl-carrier-protein] (acyl-ACP). This enzyme utilizes acyl-ACP as fatty acyl donor, but not acyl-CoA. This is Phosphate acyltransferase from Mycoplasmopsis pulmonis (strain UAB CTIP) (Mycoplasma pulmonis).